Reading from the N-terminus, the 502-residue chain is Glycerol kinase (502 aa).

Thr13 lines the ADP pocket. The ATP site is built by Thr13, Thr14, and Ser15. Position 13 (Thr13) interacts with sn-glycerol 3-phosphate. ADP is bound at residue Arg17. Residues Arg83, Glu84, Tyr136, and Asp246 each contribute to the sn-glycerol 3-phosphate site. Positions 83, 84, 136, 246, and 247 each coordinate glycerol. ADP is bound by residues Thr268 and Gly311. Residues Thr268, Gly311, Gln315, and Gly412 each coordinate ATP. ADP-binding residues include Gly412 and Asn416.

It belongs to the FGGY kinase family.

The enzyme catalyses glycerol + ATP = sn-glycerol 3-phosphate + ADP + H(+). It participates in polyol metabolism; glycerol degradation via glycerol kinase pathway; sn-glycerol 3-phosphate from glycerol: step 1/1. Its activity is regulated as follows. Inhibited by fructose 1,6-bisphosphate (FBP). In terms of biological role, key enzyme in the regulation of glycerol uptake and metabolism. Catalyzes the phosphorylation of glycerol to yield sn-glycerol 3-phosphate. The chain is Glycerol kinase from Francisella tularensis subsp. mediasiatica (strain FSC147).